Consider the following 320-residue polypeptide: MVDNNKTVDNNYKHTSVLLDEAVNGLNIRDNGIYIDGTFGRGGHSRLILSQLGPEGRLIAIDRDPQAIEAAKSITDPRFSIVHGPFSDLAHYVRELNLVGRINGVLLDLGVSSPQLDDPERGFSFMRDGPLDMRMDPTRGISAAEWLMKASADDIAWVLKTFGEERFAKRLAKAIVERNLTQPMTRTKELADLIANASPFREKHKHPATRSFQAIRIYINSELEEIERALDGALEVLAPEGRLSVISFHSLEDRIVKNFIRHHSRGPQVPAGLPLTEAQLRSMGGRTLKSVGKMMPPDAEVAENPRARSSVLRFAERIKE.

Residues glycine 42–histidine 44, aspartate 62, phenylalanine 86, aspartate 108, and glutamine 115 each bind S-adenosyl-L-methionine.

It belongs to the methyltransferase superfamily. RsmH family.

The protein resides in the cytoplasm. The enzyme catalyses cytidine(1402) in 16S rRNA + S-adenosyl-L-methionine = N(4)-methylcytidine(1402) in 16S rRNA + S-adenosyl-L-homocysteine + H(+). Its function is as follows. Specifically methylates the N4 position of cytidine in position 1402 (C1402) of 16S rRNA. This Yersinia enterocolitica serotype O:8 / biotype 1B (strain NCTC 13174 / 8081) protein is Ribosomal RNA small subunit methyltransferase H.